The sequence spans 489 residues: 3-octaprenyl-4-hydroxybenzoate carboxy-lyase (489 aa).

Residue asparagine 172 coordinates Mn(2+). Prenylated FMN-binding positions include 175 to 177 (IYR), 189 to 191 (RWL), and 194 to 195 (RG). Glutamate 238 lines the Mn(2+) pocket. Aspartate 287 serves as the catalytic Proton donor.

It belongs to the UbiD family. In terms of assembly, homohexamer. It depends on prenylated FMN as a cofactor. Requires Mn(2+) as cofactor.

Its subcellular location is the cell membrane. The catalysed reaction is a 4-hydroxy-3-(all-trans-polyprenyl)benzoate + H(+) = a 2-(all-trans-polyprenyl)phenol + CO2. It participates in cofactor biosynthesis; ubiquinone biosynthesis. Its function is as follows. Catalyzes the decarboxylation of 3-octaprenyl-4-hydroxy benzoate to 2-octaprenylphenol, an intermediate step in ubiquinone biosynthesis. In Aeromonas salmonicida (strain A449), this protein is 3-octaprenyl-4-hydroxybenzoate carboxy-lyase.